A 162-amino-acid chain; its full sequence is Calcium vector protein (162 aa).

Alanine 2 carries the post-translational modification N-acetylalanine. EF-hand domains follow at residues 12 to 47 (EEKD…LGQT), 49 to 84 (TKRE…KWVR), 86 to 121 (DDEE…VGEE), and 123 to 158 (LTDA…SKNA). At lysine 96 the chain carries N6,N6,N6-trimethyllysine. The Ca(2+) site is built by aspartate 99, asparagine 101, aspartate 103, and glutamate 110. The residue at position 117 (lysine 117) is an N6,N6,N6-trimethyllysine. 4 residues coordinate Ca(2+): aspartate 136, aspartate 138, asparagine 140, and glutamate 147.

Its subcellular location is the cytoplasm. In terms of biological role, the exact function of this protein is not yet known. It interacts with CAVPT, a protein also of unknown function, in a calcium-dependent way. This protein binds two calcium ions. The protein is Calcium vector protein of Branchiostoma lanceolatum (Common lancelet).